The primary structure comprises 186 residues: Glutathione S-transferase 1, isoform A (186 aa).

The GST N-terminal domain occupies 1–81; that stretch reads MDFYYLPGSA…YLVEKYCAHD (81 aa). Residues serine 9, 50 to 52, and 65 to 67 contribute to the glutathione site; these read HCI and ESR. Residues 92–186 enclose the GST C-terminal domain; it reads DPRRRAVVHQ…RRCRVRSAAI (95 aa).

This sequence belongs to the GST superfamily. Theta family. As to quaternary structure, homodimer.

The enzyme catalyses RX + glutathione = an S-substituted glutathione + a halide anion + H(+). Conjugation of reduced glutathione to a wide number of exogenous and endogenous hydrophobic electrophiles. The polypeptide is Glutathione S-transferase 1, isoform A (Anopheles gambiae (African malaria mosquito)).